Here is a 156-residue protein sequence, read N- to C-terminus: tRNA (cytidine(34)-2'-O)-methyltransferase (156 aa).

The S-adenosyl-L-methionine site is built by G100, I122, and S130.

It belongs to the class IV-like SAM-binding methyltransferase superfamily. RNA methyltransferase TrmH family. TrmL subfamily. As to quaternary structure, homodimer.

The protein localises to the cytoplasm. It catalyses the reaction cytidine(34) in tRNA + S-adenosyl-L-methionine = 2'-O-methylcytidine(34) in tRNA + S-adenosyl-L-homocysteine + H(+). It carries out the reaction 5-carboxymethylaminomethyluridine(34) in tRNA(Leu) + S-adenosyl-L-methionine = 5-carboxymethylaminomethyl-2'-O-methyluridine(34) in tRNA(Leu) + S-adenosyl-L-homocysteine + H(+). Methylates the ribose at the nucleotide 34 wobble position in the two leucyl isoacceptors tRNA(Leu)(CmAA) and tRNA(Leu)(cmnm5UmAA). Catalyzes the methyl transfer from S-adenosyl-L-methionine to the 2'-OH of the wobble nucleotide. This is tRNA (cytidine(34)-2'-O)-methyltransferase from Aeromonas hydrophila subsp. hydrophila (strain ATCC 7966 / DSM 30187 / BCRC 13018 / CCUG 14551 / JCM 1027 / KCTC 2358 / NCIMB 9240 / NCTC 8049).